The sequence spans 358 residues: Magnesium-protoporphyrin IX monomethyl ester [oxidative] cyclase (358 aa).

Belongs to the AcsF family. Requires Fe cation as cofactor.

The catalysed reaction is Mg-protoporphyrin IX 13-monomethyl ester + 3 NADPH + 3 O2 + 2 H(+) = 3,8-divinyl protochlorophyllide a + 3 NADP(+) + 5 H2O. It functions in the pathway porphyrin-containing compound metabolism; chlorophyll biosynthesis (light-independent). Its function is as follows. Catalyzes the formation of the isocyclic ring in chlorophyll biosynthesis. Mediates the cyclase reaction, which results in the formation of divinylprotochlorophyllide (Pchlide) characteristic of all chlorophylls from magnesium-protoporphyrin IX 13-monomethyl ester (MgPMME). The polypeptide is Magnesium-protoporphyrin IX monomethyl ester [oxidative] cyclase (Trichodesmium erythraeum (strain IMS101)).